The sequence spans 474 residues: Citrate synthase 4, mitochondrial (474 aa).

Residues 1–16 (MVFFRSVSAFTRLRSR) constitute a mitochondrion transit peptide. Residues H308, H354, and D409 contribute to the active site.

It belongs to the citrate synthase family. In terms of assembly, homodimer.

The protein localises to the mitochondrion matrix. It carries out the reaction oxaloacetate + acetyl-CoA + H2O = citrate + CoA + H(+). It functions in the pathway carbohydrate metabolism; tricarboxylic acid cycle; isocitrate from oxaloacetate: step 1/2. This is Citrate synthase 4, mitochondrial (CSY4) from Arabidopsis thaliana (Mouse-ear cress).